A 266-amino-acid polypeptide reads, in one-letter code: MVAKNVKTFALGVEYDGSYYHGWQRQKILPSIQEEIEKALSIIANHKIDVVCAGRTDAGVHSIGQVIHFKTTANRKKSSWSIGVNSYLSENISVVWVKEVTENFHARYSAITRSYRYIIYNYSLRSAIFQTKLNHIYRKLNVDKMNFEAQFLLGEHDFTSFRALGCQSHSPWRNITKLNVFRFHNWVVVDITANSFLHHMVRNIVGSLIEVGISKKKEYWIKDLLEKKDRSHAGATAPAKGLYLVYVEYPLHFNLPRSAYTSIFFK.

D57 acts as the Nucleophile in catalysis. Residue Y115 coordinates substrate.

The protein belongs to the tRNA pseudouridine synthase TruA family. Homodimer.

It carries out the reaction uridine(38/39/40) in tRNA = pseudouridine(38/39/40) in tRNA. In terms of biological role, formation of pseudouridine at positions 38, 39 and 40 in the anticodon stem and loop of transfer RNAs. This is tRNA pseudouridine synthase A from Buchnera aphidicola subsp. Acyrthosiphon pisum (strain APS) (Acyrthosiphon pisum symbiotic bacterium).